Here is a 77-residue protein sequence, read N- to C-terminus: MKLIIFTGLVLFAIVSLIEAEEESGRGCILLYGECTKATDSCCSNLICDCYRKLEKGVQIARQCFCSEKDVIYKKDI.

The signal sequence occupies residues 1 to 20 (MKLIIFTGLVLFAIVSLIEA). Positions 21 to 26 (EEESGR) are excised as a propeptide.

Belongs to the neurotoxin 19 (CSTX) family. 10 (U11-Lctx) subfamily. Post-translationally, contains 4 disulfide bonds. In terms of tissue distribution, expressed by the venom gland.

Its subcellular location is the secreted. The sequence is that of U11-lycotoxin-Ls1d from Lycosa singoriensis (Wolf spider).